We begin with the raw amino-acid sequence, 534 residues long: MDSLQIPWLTTAIAFPLLAALVIPLIPDKEGKTIRWYTLGVALTDFALLVTAFWQNYDLGRTEFQLTENFAWIPQLGLNWSLGVDGLSMPLIILATLITTLATLAAWNVTKKPKLFAGLILVMLSAQIGVFAVQDLLLFFIMWELELVPVYLLISIWGGKKRLYAATKFILYTALGSVFILASTLALAFYGGDVTFDMQALGLKDYPLALELLAYAGFLIGFGVKLPIFPLHTWLPDAHSEASAPVSMILAGVLLKMGGYGLIRLNMEMLPDAHIRFAPLLIVLGIVNIVYGALTAFGQTNLKRRLASSSISHMGFVLVGIASFTDLGMNGAVLQMLSHGFIAAALFFLSGVTYERTHTLMMDEMSGIARLMPKTFAMFTAAAMASLALPGMSGFVSELTVFLGLSNSDAYSYGFKAIAIFLTAVGVILTPIYLLSMLREVFYGKGSQAPLSLAAGEDAKPREIFVAVCLLAPIIAIGLYPKLATTTYDLKTVEVASKVRAALPLYAEQLPQNGDRQAQMGLSSQMPALIAPRF.

A run of 14 helical transmembrane segments spans residues 6 to 26, 34 to 54, 87 to 107, 113 to 133, 136 to 156, 169 to 189, 209 to 229, 243 to 263, 277 to 297, 311 to 331, 332 to 352, 376 to 396, 418 to 438, and 464 to 484; these read IPWL…IPLI, IRWY…TAFW, LSMP…LAAW, PKLF…VFAV, LLLF…LISI, FILY…ALAF, ALEL…LPIF, SAPV…YGLI, FAPL…LTAF, ISHM…GMNG, AVLQ…LSGV, FAMF…SGFV, IAIF…LSML, and IFVA…PKLA.

The protein belongs to the complex I subunit 4 family.

Its subcellular location is the cellular thylakoid membrane. The enzyme catalyses a plastoquinone + NADH + (n+1) H(+)(in) = a plastoquinol + NAD(+) + n H(+)(out). It carries out the reaction a plastoquinone + NADPH + (n+1) H(+)(in) = a plastoquinol + NADP(+) + n H(+)(out). In terms of biological role, NDH-1 shuttles electrons from NAD(P)H, via FMN and iron-sulfur (Fe-S) centers, to quinones in the respiratory chain. The immediate electron acceptor for the enzyme in this species is believed to be plastoquinone. Couples the redox reaction to proton translocation (for every two electrons transferred, four hydrogen ions are translocated across the cytoplasmic membrane), and thus conserves the redox energy in a proton gradient. The protein is NAD(P)H-quinone oxidoreductase chain 4 1 of Picosynechococcus sp. (strain ATCC 27264 / PCC 7002 / PR-6) (Agmenellum quadruplicatum).